The chain runs to 158 residues: 6,7-dimethyl-8-ribityllumazine synthase (158 aa).

5-amino-6-(D-ribitylamino)uracil is bound by residues F24, A58 to E60, and A82 to I84. G87–T88 contributes to the (2S)-2-hydroxy-3-oxobutyl phosphate binding site. H90 functions as the Proton donor in the catalytic mechanism. 5-amino-6-(D-ribitylamino)uracil is bound at residue F115. Position 129 (R129) interacts with (2S)-2-hydroxy-3-oxobutyl phosphate.

It belongs to the DMRL synthase family. In terms of assembly, forms an icosahedral capsid composed of 60 subunits, arranged as a dodecamer of pentamers.

The catalysed reaction is (2S)-2-hydroxy-3-oxobutyl phosphate + 5-amino-6-(D-ribitylamino)uracil = 6,7-dimethyl-8-(1-D-ribityl)lumazine + phosphate + 2 H2O + H(+). The protein operates within cofactor biosynthesis; riboflavin biosynthesis; riboflavin from 2-hydroxy-3-oxobutyl phosphate and 5-amino-6-(D-ribitylamino)uracil: step 1/2. Its function is as follows. Catalyzes the formation of 6,7-dimethyl-8-ribityllumazine by condensation of 5-amino-6-(D-ribitylamino)uracil with 3,4-dihydroxy-2-butanone 4-phosphate. This is the penultimate step in the biosynthesis of riboflavin. The protein is 6,7-dimethyl-8-ribityllumazine synthase of Stutzerimonas stutzeri (strain A1501) (Pseudomonas stutzeri).